We begin with the raw amino-acid sequence, 305 residues long: Dioxygenase hkm4 (305 aa).

The Fe cation site is built by His-140, Asp-142, and His-216.

This sequence belongs to the PhyH family. Fe cation serves as cofactor.

Its pathway is secondary metabolite biosynthesis. Its function is as follows. Dioxygenase; part of the gene cluster that mediates the biosynthesis of hancockiamides, an unusual new family of N-cinnamoylated piperazines. The NRPS hkm10 and the NmrA-like reductase hkm9 are proposed to convert two molecules of L-Phe to the intermediary piperazine called xenocockiamide A. Xenocockiamide A is then converted to hancockiamide D via a series of hydroxylations and O-methylations. The tyrosinase hkm6 may catalyze an aromatic hydroxylation, then the 2-oxoglutarate-dependent Fe(II) dioxygenase hkm4 and the FAD-dependent phenol hydroxylase hkm7 may catalyze consecutive hydroxylations to install 2 more hydroxy groups, and the methyltransferase hkm8 probably catalyzes two methylations using 2 molecules of S-adenosyl-L-methionine (SAM). The NRPS hkm11 activates and transfers trans-cinnamate supplied by the PAL hkm12 to hancockiamide D and produces hancockiamide A. NRPS Hkm11 has the flexibility to tolerate the bulky hancockiamide G as a substrate and the absence of the acetyl-transferase hkm3 opens up the opportunity for hkm11 to introduce a second N-cinnamoyl moiety. The cytochrome P450 monooxygenase hkm5 catalyzes the methylenedioxy bridge formation, converting hancockiamide A into hancockiamide G. Hkm5 can also convert hancockiamide B into hancockiamide C, and hancockiamide D into hancockiamide H. The N-acetyltransferase hkm3 finally transfers an acetyl group to 1-N of piperazine, converting hancockiamide A into hancockiamide B and hancockiamide G into hancockiamide C. The sequence is that of Dioxygenase hkm4 from Aspergillus hancockii.